The chain runs to 202 residues: uncharacterized protein (202 aa).

Residues 178–202 form a disordered region; it reads VCSSEDSEADRYSDYGWGGPSSPFN.

This is an uncharacterized protein from Homo sapiens (Human).